The sequence spans 387 residues: S-adenosylmethionine synthase (387 aa).

H15 provides a ligand contact to ATP. D17 is a Mg(2+) binding site. Position 43 (E43) interacts with K(+). Positions 56 and 99 each coordinate L-methionine. A flexible loop region spans residues 99-109 (QSPDIALGVNR). Residues 166 to 168 (DAK), 232 to 233 (RF), D241, 247 to 248 (RK), A264, and K268 each bind ATP. D241 provides a ligand contact to L-methionine. Position 272 (K272) interacts with L-methionine.

This sequence belongs to the AdoMet synthase family. In terms of assembly, homotetramer; dimer of dimers. Mg(2+) serves as cofactor. K(+) is required as a cofactor.

It localises to the cytoplasm. The enzyme catalyses L-methionine + ATP + H2O = S-adenosyl-L-methionine + phosphate + diphosphate. It participates in amino-acid biosynthesis; S-adenosyl-L-methionine biosynthesis; S-adenosyl-L-methionine from L-methionine: step 1/1. Its function is as follows. Catalyzes the formation of S-adenosylmethionine (AdoMet) from methionine and ATP. The overall synthetic reaction is composed of two sequential steps, AdoMet formation and the subsequent tripolyphosphate hydrolysis which occurs prior to release of AdoMet from the enzyme. This Nitrosomonas eutropha (strain DSM 101675 / C91 / Nm57) protein is S-adenosylmethionine synthase.